The primary structure comprises 405 residues: Deoxyguanosinetriphosphate triphosphohydrolase-like protein (405 aa).

The region spanning Arg75–Asn219 is the HD domain.

The protein belongs to the dGTPase family. Type 2 subfamily.

In Rhizobium johnstonii (strain DSM 114642 / LMG 32736 / 3841) (Rhizobium leguminosarum bv. viciae), this protein is Deoxyguanosinetriphosphate triphosphohydrolase-like protein.